The primary structure comprises 366 residues: Histidinol-phosphate aminotransferase 2 (366 aa).

The interval 1 to 21 (MQVKDQLSLLQPYKPGKSPEQ) is disordered. Residue K222 is modified to N6-(pyridoxal phosphate)lysine.

Belongs to the class-II pyridoxal-phosphate-dependent aminotransferase family. Histidinol-phosphate aminotransferase subfamily. In terms of assembly, homodimer. The cofactor is pyridoxal 5'-phosphate.

It catalyses the reaction L-histidinol phosphate + 2-oxoglutarate = 3-(imidazol-4-yl)-2-oxopropyl phosphate + L-glutamate. The protein operates within amino-acid biosynthesis; L-histidine biosynthesis; L-histidine from 5-phospho-alpha-D-ribose 1-diphosphate: step 7/9. In Bacillus cereus (strain ZK / E33L), this protein is Histidinol-phosphate aminotransferase 2.